The following is a 260-amino-acid chain: GDNF family receptor alpha-4 (260 aa).

An N-terminal signal peptide occupies residues 1–23; that stretch reads MAHCMESALLLLLLLGSASFTDG. A glycan (N-linked (GlcNAc...) asparagine) is linked at N184. T237 carries GPI-anchor amidated threonine lipidation. Residues 238-260 constitute a propeptide, removed in mature form; the sequence is AGCCFPRVSWLYALTALALQALL.

Belongs to the GDNFR family. In terms of assembly, interacts with ARTN ligand and RET: forms a 2:2:2 ternary complex composed of ARTN ligand, GFRA3 and RET receptor. Interacts with SORL1. As to expression, expressed in many tissues including adrenal medulla, brain neurons, with highest levels in the cerebral cortex and hippocampus. Moderate levels found in the gut circular muscle and myenteric ganglia as well as in other peripheral ganglia, including the sensory dorsal root and trigeminal as well as superior cervical and sympathetic chain ganglia. Isoform a1, isoform a2, isoform b1 and isoform b2 are exclusively found in the thyroid, parthyroid and pituitary glands.

Its subcellular location is the cell membrane. The protein localises to the secreted. Receptor for persephin (PSPN), a growth factor that exhibits neurotrophic activity on mesencephalic dopaminergic and motor neurons. Acts by binding to its coreceptor, GFRA4, leading to autophosphorylation and activation of the RET receptor. May be important in C-cell development and, in the postnatal development of the adrenal medulla. The polypeptide is GDNF family receptor alpha-4 (Gfra4) (Mus musculus (Mouse)).